The chain runs to 232 residues: Thiamine import ATP-binding protein ThiQ (232 aa).

One can recognise an ABC transporter domain in the interval 2–230; sequence LKLTDITWLY…KASASALLGI (229 aa). 32–39 is an ATP binding site; the sequence is GPSGAGKS.

It belongs to the ABC transporter superfamily. Thiamine importer (TC 3.A.1.19.1) family. The complex is composed of two ATP-binding proteins (ThiQ), two transmembrane proteins (ThiP) and a solute-binding protein (ThiB).

Its subcellular location is the cell inner membrane. The enzyme catalyses thiamine(out) + ATP + H2O = thiamine(in) + ADP + phosphate + H(+). Functionally, part of the ABC transporter complex ThiBPQ involved in thiamine import. Responsible for energy coupling to the transport system. This Escherichia coli O6:H1 (strain CFT073 / ATCC 700928 / UPEC) protein is Thiamine import ATP-binding protein ThiQ.